A 117-amino-acid polypeptide reads, in one-letter code: Hainantoxin-XV.2 (117 aa).

The signal sequence occupies residues 1 to 20 (MKLCAVIIASLLVCAAVASS). Residues 18–55 (ASSSDNQKEFAQEKEMTREETQSLGEHEKDDEVTGSEE) form a disordered region. The propeptide occupies 21-56 (SDNQKEFAQEKEMTREETQSLGEHEKDDEVTGSEER). Over residues 23-55 (NQKEFAQEKEMTREETQSLGEHEKDDEVTGSEE) the composition is skewed to basic and acidic residues. 4 disulfides stabilise this stretch: Cys-58–Cys-72, Cys-65–Cys-78, Cys-69–Cys-115, and Cys-71–Cys-91.

It belongs to the neurotoxin 03 (Tx2) family. 02 subfamily. HNTX-XV sub-subfamily. Expressed by the venom gland.

The protein resides in the secreted. Functionally, putative ion channel inhibitor. In Cyriopagopus hainanus (Chinese bird spider), this protein is Hainantoxin-XV.2.